Consider the following 247-residue polypeptide: Lipoprotein-releasing system ATP-binding protein LolD 2 (247 aa).

The ABC transporter domain maps to 19–247; sequence LEARKLVKSY…QDGRLQACGG (229 aa). 56–63 serves as a coordination point for ATP; sequence GASGSGKT.

It belongs to the ABC transporter superfamily. Lipoprotein translocase (TC 3.A.1.125) family. As to quaternary structure, the complex is composed of two ATP-binding proteins (LolD) and two transmembrane proteins (LolC and LolE).

Its subcellular location is the cell inner membrane. In terms of biological role, part of the ABC transporter complex LolCDE involved in the translocation of mature outer membrane-directed lipoproteins, from the inner membrane to the periplasmic chaperone, LolA. Responsible for the formation of the LolA-lipoprotein complex in an ATP-dependent manner. The chain is Lipoprotein-releasing system ATP-binding protein LolD 2 from Chlorobaculum tepidum (strain ATCC 49652 / DSM 12025 / NBRC 103806 / TLS) (Chlorobium tepidum).